Reading from the N-terminus, the 371-residue chain is Geranylgeranyl transferase type-2 subunit alpha (371 aa).

PFTA repeat units follow at residues 45-79 (YSDE…NNYS), 92-126 (ILNQ…ELVK), 131-165 (NWKY…NMEL), 177-211 (INLD…KIYN), and 242-276 (LLKN…DDLF).

This sequence belongs to the protein prenyltransferase subunit alpha family. Heterodimer of an alpha and a beta subunit.

The catalysed reaction is geranylgeranyl diphosphate + L-cysteinyl-[protein] = S-geranylgeranyl-L-cysteinyl-[protein] + diphosphate. In terms of biological role, catalyzes the transfer of a geranyl-geranyl moiety from geranyl-geranyl pyrophosphate to proteins having the C-terminal -XCC or -XCXC, where both cysteines may become modified. Acts on YPT1 and SEC4. This chain is Geranylgeranyl transferase type-2 subunit alpha (BET4), found in Candida albicans (Yeast).